The following is a 325-amino-acid chain: E3 ubiquitin-protein ligase SIAH2 (325 aa).

The span at Met-1–Cys-15 shows a compositional bias: polar residues. The segment at Met-1–Gly-43 is disordered. Position 6 is a phosphoserine (Ser-6). Ser-16 is modified (phosphoserine; by DYRK2). Positions Lys-17–Pro-33 are enriched in pro residues. Thr-24 is modified (phosphothreonine; by MAPK14). At Ser-29 the chain carries Phosphoserine; by DYRK2 and MAPK14. Residues Pro-34–Gly-43 are compositionally biased toward low complexity. Position 69 is a phosphoserine; by DYRK2 (Ser-69). The segment at Cys-81–Arg-116 adopts an RING-type zinc-finger fold. Thr-120 is subject to Phosphothreonine; by DYRK2. Residues Val-131 to Cys-323 form an SBD region. The SIAH-type zinc finger occupies Ala-134–Lys-194. The Zn(2+) site is built by Cys-139, Cys-146, His-158, Cys-162, Cys-169, Cys-176, His-188, and His-193.

It belongs to the SINA (Seven in absentia) family. Homodimer. Interacts with UBE2E2. Interacts with VAV1, without mediating its ubiquitin-mediated degradation. Interacts with CACYBP/SIP. Probable component of some large E3 complex possibly composed of UBE2D1, SIAH2, CACYBP/SIP, SKP1, APC and TBL1X. Interacts with UBE2I. Interacts with PEG10, which may inhibit its activity. Interacts with EGLN2 and SNCAIP. Interacts with DYRK2. Interacts with PEG3. Interacts with NR1D1 and NR1D2. Interacts with DCC. Interacts with AXIN1. Post-translationally, phosphorylated at Ser-29 by DYRK2; this increases the ubiquitin ligase activity and promotes degradation of EGLN3. Phosphorylated at Thr-24 and Ser-29 by MAPK14, which mediates the degradation by the proteasome of EGLN3. Widely expressed at low level in embryos and adults. Expressed in a specific population of germ cells within both the mouse ovary and testis. Absent in primordial oocytes but expressed in all growing oocytes, coincident with their recruitment from the pool of quiescent cells. Its level of expression increases as the oocytes mature. Expressed in Graafian follicles and in fertilized zygotes up until the two cell stage, a time of extensive maternal transcript degradation and zygotic gene activation. Expressed in the testis from postmeiotic spermatids.

Its subcellular location is the cytoplasm. It is found in the nucleus. It carries out the reaction S-ubiquitinyl-[E2 ubiquitin-conjugating enzyme]-L-cysteine + [acceptor protein]-L-lysine = [E2 ubiquitin-conjugating enzyme]-L-cysteine + N(6)-ubiquitinyl-[acceptor protein]-L-lysine.. It participates in protein modification; protein ubiquitination. In terms of biological role, E3 ubiquitin-protein ligase that mediates ubiquitination and subsequent proteasomal degradation of target proteins. E3 ubiquitin ligases accept ubiquitin from an E2 ubiquitin-conjugating enzyme in the form of a thioester and then directly transfers the ubiquitin to targeted substrates. Mediates E3 ubiquitin ligase activity either through direct binding to substrates or by functioning as the essential RING domain subunit of larger E3 complexes. Mediates ubiquitination and proteasomal degradation of DYRK2 in response to hypoxia. Promotes monoubiquitination of SNCA. Triggers the ubiquitin-mediated degradation of many substrates, including proteins involved in transcription regulation (GPS2, POU2AF1, PML, NCOR1), a cell surface receptor (DCC), an antiapoptotic protein (BAG1), and a protein involved in synaptic vesicle function in neurons (SYP). It is thereby involved in apoptosis, tumor suppression, cell cycle, transcription and signaling processes. Has some overlapping function with SIAH1. Triggers the ubiquitin-mediated degradation of TRAF2, whereas SIAH1 does not. Regulates cellular clock function via ubiquitination of the circadian transcriptional repressors NR1D1 and NR1D2 leading to their proteasomal degradation. Plays an important role in mediating the rhythmic degradation/clearance of NR1D1 and NR1D2 contributing to their circadian profile of protein abundance. Mediates ubiquitination and degradation of EGLN2 and EGLN3 in response to the unfolded protein response (UPR), leading to their degradation and subsequent stabilization of ATF4. Also part of the Wnt signaling pathway in which it mediates the Wnt-induced ubiquitin-mediated proteasomal degradation of AXIN1. This Mus musculus (Mouse) protein is E3 ubiquitin-protein ligase SIAH2 (Siah2).